The primary structure comprises 115 residues: Large ribosomal subunit protein bL19 (115 aa).

This sequence belongs to the bacterial ribosomal protein bL19 family.

Its function is as follows. This protein is located at the 30S-50S ribosomal subunit interface and may play a role in the structure and function of the aminoacyl-tRNA binding site. The polypeptide is Large ribosomal subunit protein bL19 (Lachnospira eligens (strain ATCC 27750 / DSM 3376 / VPI C15-48 / C15-B4) (Eubacterium eligens)).